Consider the following 177-residue polypeptide: Large ribosomal subunit protein uL22 (177 aa).

The segment at 118 to 177 is disordered; the sequence is VESRPSREGRRGGAGESAGGARARRAQGSKAAAAKKAPASSSKKAATTTEASEEAKGGSQ. Residues 121-130 are compositionally biased toward basic and acidic residues; it reads RPSREGRRGG. Positions 145 to 167 are enriched in low complexity; it reads GSKAAAAKKAPASSSKKAATTTE.

This sequence belongs to the universal ribosomal protein uL22 family. Part of the 50S ribosomal subunit.

Functionally, this protein binds specifically to 23S rRNA; its binding is stimulated by other ribosomal proteins, e.g. L4, L17, and L20. It is important during the early stages of 50S assembly. It makes multiple contacts with different domains of the 23S rRNA in the assembled 50S subunit and ribosome. In terms of biological role, the globular domain of the protein is located near the polypeptide exit tunnel on the outside of the subunit, while an extended beta-hairpin is found that lines the wall of the exit tunnel in the center of the 70S ribosome. The protein is Large ribosomal subunit protein uL22 of Mycobacterium sp. (strain KMS).